The primary structure comprises 419 residues: Isocitrate dehydrogenase [NADP] (419 aa).

Threonine 102 contacts NADP(+). The D-threo-isocitrate site is built by serine 111, asparagine 113, arginine 117, arginine 127, and arginine 151. Aspartate 306 contacts Mg(2+). Residues 338–344 (HGSAPKY), asparagine 351, tyrosine 390, and arginine 394 contribute to the NADP(+) site.

The protein belongs to the isocitrate and isopropylmalate dehydrogenases family. As to quaternary structure, homodimer. Mg(2+) is required as a cofactor. Mn(2+) serves as cofactor.

It carries out the reaction D-threo-isocitrate + NADP(+) = 2-oxoglutarate + CO2 + NADPH. Its function is as follows. Catalyzes the oxidative decarboxylation of isocitrate to 2-oxoglutarate and carbon dioxide with the concomitant reduction of NADP(+). In Haloferax volcanii (strain ATCC 29605 / DSM 3757 / JCM 8879 / NBRC 14742 / NCIMB 2012 / VKM B-1768 / DS2) (Halobacterium volcanii), this protein is Isocitrate dehydrogenase [NADP].